Consider the following 122-residue polypeptide: MIQKETNLVVADNSGAKKVRCIHVFGGTGRRYAALGDQIMVSVKAAVPGGVVKKKDVCKAVVVRCVKEQKRKDGSYIRFDENAVVLLNAQGEPRGTRIFGPVARELRDKRYMKIVSLAPEVL.

This sequence belongs to the universal ribosomal protein uL14 family. Part of the 50S ribosomal subunit. Forms a cluster with proteins L3 and L19. In the 70S ribosome, L14 and L19 interact and together make contacts with the 16S rRNA in bridges B5 and B8.

Functionally, binds to 23S rRNA. Forms part of two intersubunit bridges in the 70S ribosome. This Chlorobaculum tepidum (strain ATCC 49652 / DSM 12025 / NBRC 103806 / TLS) (Chlorobium tepidum) protein is Large ribosomal subunit protein uL14.